Reading from the N-terminus, the 304-residue chain is Phosphonates import ATP-binding protein PhnC 1 (304 aa).

The region spanning valine 4–serine 240 is the ABC transporter domain. Residue glycine 37–serine 44 participates in ATP binding. The tract at residues serine 240–leucine 304 is disordered. The span at threonine 263 to threonine 272 shows a compositional bias: polar residues. The span at threonine 289 to leucine 304 shows a compositional bias: acidic residues.

The protein belongs to the ABC transporter superfamily. Phosphonates importer (TC 3.A.1.9.1) family. The complex is composed of two ATP-binding proteins (PhnC), two transmembrane proteins (PhnE) and a solute-binding protein (PhnD).

The protein resides in the cell membrane. The enzyme catalyses phosphonate(out) + ATP + H2O = phosphonate(in) + ADP + phosphate + H(+). In terms of biological role, part of the ABC transporter complex PhnCDE involved in phosphonates import. Responsible for energy coupling to the transport system. This Haloquadratum walsbyi (strain DSM 16790 / HBSQ001) protein is Phosphonates import ATP-binding protein PhnC 1.